A 977-amino-acid polypeptide reads, in one-letter code: Short transient receptor potential channel 4 (977 aa).

Residues 1-324 (MAQFYYKRNV…YDEFPGWRRR (324 aa)) are Cytoplasmic-facing. ANK repeat units lie at residues 29–60 (LSPS…IYFK), 71–93 (RTAL…LSFN), 96–118 (VGDA…LLNH), and 141–165 (PDIT…VQKG). Residues histidine 172, cysteine 176, cysteine 178, and cysteine 181 each coordinate Zn(2+). The stretch at 223–260 (LSWELQELSKVENEFKSEYEELSRQCKQFAKDLLDQTR) forms a coiled coil. The discontinuously helical intramembrane region spans 325–359 (HWAVKMVTCFIIGLLFPVFSVCYLIAPKSPLGLFI). Residues 360 to 362 (RKP) are Cytoplasmic-facing. Residues 363-383 (FIKFICHTASYLTFLFLLLLA) form a helical membrane-spanning segment. Residues 384-403 (SQHIDRSDLNRQGPPPTIVE) are Extracellular-facing. Residues 404–418 (WMILPWVLGFIWGEI) traverse the membrane as a helical segment. 4 residues coordinate Ca(2+): glutamate 417, glutamine 420, asparagine 435, and aspartate 438. At 419-432 (KQMWDGGLQDYIHD) the chain is on the cytoplasmic side. A helical membrane pass occupies residues 433-453 (WWNLMDFVMNSLYLATISLKI). Residues 454–475 (VAFVKYSALNPRESWDMWHPTL) lie on the Extracellular side of the membrane. The chain crosses the membrane as a helical span at residues 476 to 498 (VAEALFAIANIFSSLRLISLFTA). At 499-511 (NSHLGPLQISLGR) the chain is on the cytoplasmic side. The helical transmembrane segment at 512–534 (MLLDILKFLFIYCLVLLAFANGL) threads the bilayer. The Extracellular segment spans residues 535-599 (NQLYFYYEET…HEFTEFVGAT (65 aa)). Cysteines 549 and 554 form a disulfide. Residues 600 to 620 (MFGTYNVISLVVLLNMLIAMM) form a helical membrane-spanning segment. The segment at 615 to 977 (MLIAMMNNSY…THEDYVTTRL (363 aa)) is interaction with ITPR1, ITPR2 and ITPR3. Topologically, residues 621–977 (NNSYQLIADH…THEDYVTTRL (357 aa)) are cytoplasmic. The segment at 762-790 (IQSANASKESSNSADSDEKSDSEGNSKDK) is disordered. Over residues 764-775 (SANASKESSNSA) the composition is skewed to low complexity. Residues 777–788 (SDEKSDSEGNSK) are compositionally biased toward basic and acidic residues. Phosphotyrosine; by FYN is present on residues tyrosine 959 and tyrosine 972. Residues 975-977 (TRL) are PDZ-binding domain.

This sequence belongs to the transient receptor (TC 1.A.4) family. STrpC subfamily. TRPC4 sub-subfamily. Homotetramer. Heterotetramer with TRPC1 and/or TRPC5. Forms a heteromeric ion channel with TRPC1, with a 1:3 TRPC1:TRPC4 stoichiometry. Interacts with TRPC4AP. Isoform alpha but not isoform beta interacts with ITPR1, ITPR2 and ITPR3. Interacts with (via PDZ-binding domain) with NHERF1. Interacts with MX1 and RNF24. Interacts (via CIRB domain) with SESTD1 (via spectrin 1 repeat). Interacts with CDH5 and CTNNB1. Interacts with SPTAN1 (via C-terminal spectrin repeats) and SPTBN5 (via C-terminus). Interacts (via protein 4.1-binding domain) with EPB41L2. Interacts with PLSCR1. Post-translationally, phosphorylation modulates TRPC channel function by regulating the level of TRPC4 at the cell surface and by increasing the association with NHERF1. Strongly expressed in placenta. Expressed at lower levels in heart, pancreas, kidney and brain. Expressed in endothelial cells. Isoform alpha was found to be the predominant isoform. Isoform beta was not found in pancreas and brain.

Its subcellular location is the cell membrane. The enzyme catalyses Ca(2+)(in) = Ca(2+)(out). It carries out the reaction Na(+)(in) = Na(+)(out). It catalyses the reaction Li(+)(in) = Li(+)(out). The catalysed reaction is Cs(+)(in) = Cs(+)(out). With respect to regulation, may be operated by a phosphatidylinositol second messenger system activated by receptor tyrosine kinases or G-protein coupled receptors. May be activated by intracellular calcium store depletion. Inhibited by xanthine-based inhibitor Pico145. Forms a receptor-activated non-selective calcium permeant cation channel. Acts as a cell-cell contact-dependent endothelial calcium entry channel. Forms a homomeric ion channel or a heteromeric ion channel with TRPC1; the heteromeric ion channel has reduced calcium permeability compared to the homomeric channel. Also permeable to monovalent ions including sodium, lithium and cesium ions. In terms of biological role, forms a receptor-activated non-selective calcium permeant cation channel. This is Short transient receptor potential channel 4 (TRPC4) from Homo sapiens (Human).